The following is a 152-amino-acid chain: Ribosome maturation factor RimP (152 aa).

It belongs to the RimP family.

Its subcellular location is the cytoplasm. Functionally, required for maturation of 30S ribosomal subunits. In Francisella tularensis subsp. tularensis (strain FSC 198), this protein is Ribosome maturation factor RimP.